Consider the following 474-residue polypeptide: L-arabinose isomerase (474 aa).

Mn(2+) contacts are provided by Glu306, Glu331, His348, and His447.

It belongs to the arabinose isomerase family. Mn(2+) serves as cofactor.

The catalysed reaction is beta-L-arabinopyranose = L-ribulose. It functions in the pathway carbohydrate degradation; L-arabinose degradation via L-ribulose; D-xylulose 5-phosphate from L-arabinose (bacterial route): step 1/3. Catalyzes the conversion of L-arabinose to L-ribulose. The chain is L-arabinose isomerase from Levilactobacillus brevis (strain ATCC 367 / BCRC 12310 / CIP 105137 / JCM 1170 / LMG 11437 / NCIMB 947 / NCTC 947) (Lactobacillus brevis).